Here is a 744-residue protein sequence, read N- to C-terminus: 3-isopropylmalate dehydratase (744 aa).

[4Fe-4S] cluster contacts are provided by cysteine 341, cysteine 401, and cysteine 404.

Belongs to the aconitase/IPM isomerase family. In terms of assembly, monomer. It depends on [4Fe-4S] cluster as a cofactor.

The enzyme catalyses (2R,3S)-3-isopropylmalate = (2S)-2-isopropylmalate. It participates in amino-acid biosynthesis; L-leucine biosynthesis; L-leucine from 3-methyl-2-oxobutanoate: step 2/4. In terms of biological role, catalyzes the isomerization between 2-isopropylmalate and 3-isopropylmalate, via the formation of 2-isopropylmaleate. In Phycomyces blakesleeanus (strain ATCC 8743b / DSM 1359 / FGSC 10004 / NBRC 33097 / NRRL 1555), this protein is 3-isopropylmalate dehydratase (leu1).